The following is an 88-amino-acid chain: UPF0237 protein spr0217 (88 aa).

One can recognise an ACT domain in the interval 4 to 77; the sequence is IITVVGKDKS…QTLNVKINIQ (74 aa).

It belongs to the UPF0237 family. In terms of assembly, homodimer.

The chain is UPF0237 protein spr0217 from Streptococcus pneumoniae (strain ATCC BAA-255 / R6).